The primary structure comprises 130 residues: Small ribosomal subunit protein uS8 (130 aa).

The protein belongs to the universal ribosomal protein uS8 family. As to quaternary structure, part of the 30S ribosomal subunit. Contacts proteins S5 and S12.

Its function is as follows. One of the primary rRNA binding proteins, it binds directly to 16S rRNA central domain where it helps coordinate assembly of the platform of the 30S subunit. In Psychromonas ingrahamii (strain DSM 17664 / CCUG 51855 / 37), this protein is Small ribosomal subunit protein uS8.